We begin with the raw amino-acid sequence, 379 residues long: UDP-4-amino-4-deoxy-L-arabinose--oxoglutarate aminotransferase (379 aa).

Lysine 182 is modified (N6-(pyridoxal phosphate)lysine).

The protein belongs to the DegT/DnrJ/EryC1 family. ArnB subfamily. Homodimer. Pyridoxal 5'-phosphate serves as cofactor.

The enzyme catalyses UDP-4-amino-4-deoxy-beta-L-arabinose + 2-oxoglutarate = UDP-beta-L-threo-pentopyranos-4-ulose + L-glutamate. Its pathway is nucleotide-sugar biosynthesis; UDP-4-deoxy-4-formamido-beta-L-arabinose biosynthesis; UDP-4-deoxy-4-formamido-beta-L-arabinose from UDP-alpha-D-glucuronate: step 2/3. It participates in bacterial outer membrane biogenesis; lipopolysaccharide biosynthesis. In terms of biological role, catalyzes the conversion of UDP-4-keto-arabinose (UDP-Ara4O) to UDP-4-amino-4-deoxy-L-arabinose (UDP-L-Ara4N). The modified arabinose is attached to lipid A and is required for resistance to polymyxin and cationic antimicrobial peptides. The protein is UDP-4-amino-4-deoxy-L-arabinose--oxoglutarate aminotransferase of Shigella sonnei (strain Ss046).